Here is a 176-residue protein sequence, read N- to C-terminus: MSLKPFTYPFPETRFLHAGPNVYKFKIRYGKSIRGEEIENKEVITQELEVPVEKKAVGAVMRKRKHMDEPSSPSRPGLDRAKIGTSSQGPSKKKPPVETRRNRERKTQQGLQETLASDITDVQKQDSEWGHSLPGRIVPPLQHNSPPPKERAATGFFGFLSSLFPFRYFFRKSSHS.

Residues 1 to 151 are Nuclear-facing; that stretch reads MSLKPFTYPF…QHNSPPPKER (151 aa). The interval 59-150 is disordered; it reads AVMRKRKHMD…LQHNSPPPKE (92 aa). Positions 95 to 107 are enriched in basic and acidic residues; it reads PPVETRRNRERKT. Residues 108-120 are compositionally biased toward polar residues; sequence QQGLQETLASDIT. Residues 152–170 traverse the membrane as a helical segment; it reads AATGFFGFLSSLFPFRYFF. At 171 to 176 the chain is on the perinuclear space side; the sequence is RKSSHS.

This sequence belongs to the MAJIN family. Component of the MAJIN-TERB1-TERB2 complex, composed of MAJIN, TERB1 and TERB2.

It is found in the nucleus inner membrane. The protein localises to the chromosome. Its subcellular location is the telomere. Functionally, meiosis-specific telomere-associated protein involved in meiotic telomere attachment to the nucleus inner membrane, a crucial step for homologous pairing and synapsis. Component of the MAJIN-TERB1-TERB2 complex, which promotes telomere cap exchange by mediating attachment of telomeric DNA to the inner nuclear membrane and replacement of the protective cap of telomeric chromosomes: in early meiosis, the MAJIN-TERB1-TERB2 complex associates with telomeric DNA and the shelterin/telosome complex. During prophase, the complex matures and promotes release of the shelterin/telosome complex from telomeric DNA. In the complex, MAJIN acts as the anchoring subunit to the nucleus inner membrane. MAJIN shows DNA-binding activity, possibly for the stabilization of telomere attachment on the nucleus inner membrane. The protein is Membrane-anchored junction protein of Homo sapiens (Human).